Consider the following 740-residue polypeptide: Probable RNA-dependent RNA polymerase 1 (740 aa).

The protein belongs to the RdRP family.

It carries out the reaction RNA(n) + a ribonucleoside 5'-triphosphate = RNA(n+1) + diphosphate. In terms of biological role, probably involved in the RNA silencing pathway and required for the generation of small interfering RNAs (siRNAs). This chain is Probable RNA-dependent RNA polymerase 1 (RDR1), found in Oryza sativa subsp. japonica (Rice).